The following is a 151-amino-acid chain: MAQDDQEINYFVRVHNTDLDGTKPVLISLTGIKGVGRHTAKFIAETAGVEKNVLMGKLDEASVDRIREVVSNYADRIPVWMSNRPKDVYTGVKRHLLGADVTMTVDDDINLLKKIRAYRGIRHETGQKVRGQRTKSTGRTGLIVGVKRKKA.

This sequence belongs to the universal ribosomal protein uS13 family. Part of the 30S ribosomal subunit. Forms a loose heterodimer with protein S19. Forms two bridges to the 50S subunit in the 70S ribosome.

Located at the top of the head of the 30S subunit, it contacts several helices of the 16S rRNA. In the 70S ribosome it contacts the 23S rRNA (bridge B1a) and protein L5 of the 50S subunit (bridge B1b), connecting the 2 subunits; these bridges are implicated in subunit movement. The protein is Small ribosomal subunit protein uS13 of Methanospirillum hungatei JF-1 (strain ATCC 27890 / DSM 864 / NBRC 100397 / JF-1).